The primary structure comprises 296 residues: Phosphoribosylaminoimidazole-succinocarboxamide synthase (296 aa).

The protein belongs to the SAICAR synthetase family.

The enzyme catalyses 5-amino-1-(5-phospho-D-ribosyl)imidazole-4-carboxylate + L-aspartate + ATP = (2S)-2-[5-amino-1-(5-phospho-beta-D-ribosyl)imidazole-4-carboxamido]succinate + ADP + phosphate + 2 H(+). It participates in purine metabolism; IMP biosynthesis via de novo pathway; 5-amino-1-(5-phospho-D-ribosyl)imidazole-4-carboxamide from 5-amino-1-(5-phospho-D-ribosyl)imidazole-4-carboxylate: step 1/2. The protein is Phosphoribosylaminoimidazole-succinocarboxamide synthase of Geobacter metallireducens (strain ATCC 53774 / DSM 7210 / GS-15).